A 587-amino-acid chain; its full sequence is Capsid vertex component 2 (587 aa).

The tract at residues 1–53 (MAEYVNYVLGSLYVSDTATSTIPTDVRNFIAPPFPLNFWSGPTFTVRSNTRAD) is interaction with major capsid protein/MCP. A disordered region spans residues 113 to 132 (SADAATPQVNASEADQRPDN).

It belongs to the herpesviridae CVC2 protein family. As to quaternary structure, heterodimerizes with CVC1. Interacts with major capsid protein/MCP and triplex capsid protein 1/TRX1 at the pentamer vertices. Interacts with the large tegument protein/LTP.

The protein localises to the virion. The protein resides in the host nucleus. Functionally, capsid vertex-specific component that plays a role during viral DNA encapsidation, assuring correct genome cleavage and presumably stabilizing capsids that contain full-length viral genomes. Participates in the interaction between the capsid and the tegument through interaction with the large tegument protein/LTP. The sequence is that of Capsid vertex component 2 from Equine herpesvirus 1 (strain V592) (EHV-1).